The sequence spans 344 residues: Heat-inducible transcription repressor HrcA (344 aa).

It belongs to the HrcA family.

Its function is as follows. Negative regulator of class I heat shock genes (grpE-dnaK-dnaJ and groELS operons). Prevents heat-shock induction of these operons. This chain is Heat-inducible transcription repressor HrcA, found in Streptococcus pyogenes serotype M6 (strain ATCC BAA-946 / MGAS10394).